A 253-amino-acid chain; its full sequence is Hydroxyacylglutathione hydrolase (253 aa).

Positions 54, 56, 58, 59, 112, 131, and 169 each coordinate Zn(2+).

Belongs to the metallo-beta-lactamase superfamily. Glyoxalase II family. As to quaternary structure, monomer. The cofactor is Zn(2+).

The enzyme catalyses an S-(2-hydroxyacyl)glutathione + H2O = a 2-hydroxy carboxylate + glutathione + H(+). It functions in the pathway secondary metabolite metabolism; methylglyoxal degradation; (R)-lactate from methylglyoxal: step 2/2. In terms of biological role, thiolesterase that catalyzes the hydrolysis of S-D-lactoyl-glutathione to form glutathione and D-lactic acid. In Bartonella quintana (strain Toulouse) (Rochalimaea quintana), this protein is Hydroxyacylglutathione hydrolase.